Consider the following 271-residue polypeptide: uncharacterized protein (271 aa).

Belongs to the metallo-dependent hydrolases superfamily. Peptidase M19 family.

This is an uncharacterized protein from Klebsiella pneumoniae.